The sequence spans 140 residues: Transcription antitermination protein NusB (140 aa).

It belongs to the NusB family.

Involved in transcription antitermination. Required for transcription of ribosomal RNA (rRNA) genes. Binds specifically to the boxA antiterminator sequence of the ribosomal RNA (rrn) operons. The polypeptide is Transcription antitermination protein NusB (Streptococcus pneumoniae serotype 2 (strain D39 / NCTC 7466)).